Reading from the N-terminus, the 754-residue chain is Zinc finger protein with KRAB and SCAN domains 7 (754 aa).

Residue lysine 28 forms a Glycyl lysine isopeptide (Lys-Gly) (interchain with G-Cter in SUMO2) linkage. The SCAN box domain occupies 54-136 (RLHFRQLCYH…AVVEDFQRHL (83 aa)). The tract at residues 157 to 215 (TALGTTKESPPTSPLSGGSAPGAHLEPPYDPGTHHLPSGDFAQCTSPVPTLPQVGNSGD) is disordered. 2 stretches are compositionally biased toward polar residues: residues 158-172 (ALGTTKESPPTSPLS) and 199-215 (QCTSPVPTLPQVGNSGD). Positions 231-306 (VAYEDLSVDY…TSGGLFGVVP (76 aa)) constitute a KRAB domain. 10 consecutive C2H2-type zinc fingers follow at residues 383-405 (YRCDECGKAFNRSSHLIGHQRIH), 411-433 (YECNECGKTFRQTSQLIVHLRTH), 439-461 (YECSECGKAYRHSSHLIQHQRLH), 467-489 (YKCNECAKAFTQSSRLTDHQRTH), 495-517 (YECNECGEAFIRSKSLARHQVLH), 523-545 (YKCNECGRAFCSNRNLIDHQRIH), 551-573 (YECSECGKAFSRSKCLIRHQSLH), 579-601 (YKCSECGKAFNQNSQLIEHERIH), 607-629 (FECSECGKAFGLSKCLIRHQRLH), and 635-657 (YKCNECGKSFNQNSHLIIHQRIH). A C2H2-type 11; degenerate zinc finger spans residues 663–685 (YECNECGKVFSYSSSLMVHQRTH). 2 C2H2-type zinc fingers span residues 691–713 (YKCNDCGKAFSDSSQLIVHQRVH) and 719–741 (YECSECGKAFSQRSTFNHHQRTH). The tract at residues 735–754 (NHHQRTHTGEKSSGLAWSVS) is disordered.

This sequence belongs to the krueppel C2H2-type zinc-finger protein family.

Its subcellular location is the nucleus. May be involved in transcriptional regulation. In Homo sapiens (Human), this protein is Zinc finger protein with KRAB and SCAN domains 7 (ZKSCAN7).